Reading from the N-terminus, the 198-residue chain is Nucleoside triphosphate pyrophosphatase (198 aa).

Aspartate 72 acts as the Proton acceptor in catalysis.

The protein belongs to the Maf family. A divalent metal cation serves as cofactor.

It localises to the cytoplasm. The enzyme catalyses a ribonucleoside 5'-triphosphate + H2O = a ribonucleoside 5'-phosphate + diphosphate + H(+). It catalyses the reaction a 2'-deoxyribonucleoside 5'-triphosphate + H2O = a 2'-deoxyribonucleoside 5'-phosphate + diphosphate + H(+). In terms of biological role, nucleoside triphosphate pyrophosphatase. May have a dual role in cell division arrest and in preventing the incorporation of modified nucleotides into cellular nucleic acids. This is Nucleoside triphosphate pyrophosphatase from Corynebacterium diphtheriae (strain ATCC 700971 / NCTC 13129 / Biotype gravis).